The following is a 317-amino-acid chain: Transaldolase (317 aa).

The Schiff-base intermediate with substrate role is filled by lysine 132.

It belongs to the transaldolase family. Type 1 subfamily. As to quaternary structure, homodimer.

It localises to the cytoplasm. It carries out the reaction D-sedoheptulose 7-phosphate + D-glyceraldehyde 3-phosphate = D-erythrose 4-phosphate + beta-D-fructose 6-phosphate. The protein operates within carbohydrate degradation; pentose phosphate pathway; D-glyceraldehyde 3-phosphate and beta-D-fructose 6-phosphate from D-ribose 5-phosphate and D-xylulose 5-phosphate (non-oxidative stage): step 2/3. Functionally, transaldolase is important for the balance of metabolites in the pentose-phosphate pathway. The protein is Transaldolase of Actinobacillus succinogenes (strain ATCC 55618 / DSM 22257 / CCUG 43843 / 130Z).